Here is a 698-residue protein sequence, read N- to C-terminus: Topoisomerase subunit TopoN (698 aa).

Residue lysine 429 forms an Isoglutamyl lysine isopeptide (Lys-Gln) (interchain with Q-Cter in protein Pup) linkage. The segment at 443 to 473 is disordered; sequence GAKARARAASKAKGLGTNLSLPPKLLPSRES. A Toprim domain is found at 479–593; that stretch reads AELFLCEGDS…AGMVYVTMPP (115 aa).

Belongs to the type II topoisomerase family. As to quaternary structure, a complex of TopoN and TopoM, possibly a heterotetramer. Mg(2+) serves as cofactor.

It carries out the reaction ATP-dependent breakage, passage and rejoining of double-stranded DNA.. Its activity is regulated as follows. Inhibited by quinolone antibiotic ciprofloxacin and coumarin antibiotic novobiocin, but at much higher concentrations than is usual for DNA gyrase/topoisomerase. Catalyzes the relaxation of negatively supercoiled DNA in the presence of ATP or dATP but not other nucleotides. Individual subunits have no activity. Not able to negatively supercoil DNA, it can however introduce positive supercoils in DNA. Relaxes positive supercoils in an ATP-dependent manner. Catenates and decatenates DNA. Generates dsDNA breaks in the presence of the quinolone antibiotic ciprofloxacin, showing it is a topoisomerase. The protein is Topoisomerase subunit TopoN of Mycolicibacterium smegmatis (strain ATCC 700084 / mc(2)155) (Mycobacterium smegmatis).